The following is a 206-amino-acid chain: MELELLNEQGQAASKVDAPDTVFGRDYNEALVHQVVVAYQANARQGTRAQKDRQTVKHSTKKPWRQKGTGRARAGMTSSPLWRGGGRIFPNSPEENFSHKVNKKMYRAGMAAIFSQLAREGRLAVVDSIKVETPKTKALAAKFKAMGLESVLVIADEVDENLFLASRNLANVLVIEPRYADPLSLVFYKKVLVTKGAIEKLKEMLA.

The disordered stretch occupies residues 44–77; it reads RQGTRAQKDRQTVKHSTKKPWRQKGTGRARAGMT. Residues 56 to 70 show a composition bias toward basic residues; sequence VKHSTKKPWRQKGTG.

This sequence belongs to the universal ribosomal protein uL4 family. As to quaternary structure, part of the 50S ribosomal subunit.

In terms of biological role, one of the primary rRNA binding proteins, this protein initially binds near the 5'-end of the 23S rRNA. It is important during the early stages of 50S assembly. It makes multiple contacts with different domains of the 23S rRNA in the assembled 50S subunit and ribosome. Functionally, forms part of the polypeptide exit tunnel. This is Large ribosomal subunit protein uL4 from Methylibium petroleiphilum (strain ATCC BAA-1232 / LMG 22953 / PM1).